Here is a 94-residue protein sequence, read N- to C-terminus: YcgL domain-containing protein VP0875 (94 aa).

A YcgL domain is found at 1-84 (MLCSIYKSSK…PPENLLEKYK (84 aa)).

This chain is YcgL domain-containing protein VP0875, found in Vibrio parahaemolyticus serotype O3:K6 (strain RIMD 2210633).